The primary structure comprises 162 residues: Anaerobic nitrite reductase NSHB2 (162 aa).

The Globin domain maps to serine 16–lysine 159. The Homodimerization signature appears at glutamate 49–serine 53. Heme b-binding residues include serine 59, lysine 73, histidine 77, arginine 100, threonine 104, and histidine 105. The short motif at aspartate 112–glutamate 124 is the Homodimerization element.

This sequence belongs to the plant globin family. As to quaternary structure, homodimer. Heme b is required as a cofactor. As to expression, mainly expressed in germinating seeds, seedlings, roots, flowers and leaves.

It is found in the cytoplasm. The protein localises to the nucleus. The catalysed reaction is Fe(III)-heme b-[protein] + nitric oxide + H2O = Fe(II)-heme b-[protein] + nitrite + 2 H(+). Functionally, phytoglobin that reduces nitrite to nitric oxide under anoxic conditions (e.g. during flooding or in waterlogged soil). May not function as an oxygen storage or transport protein. Has an unusually high affinity for O(2) through an hexacoordinate heme iron because of a very low dissociation constant. Promotes tolerance to low potassium K(+) conditions. The protein is Anaerobic nitrite reductase NSHB2 of Oryza sativa subsp. indica (Rice).